Here is a 172-residue protein sequence, read N- to C-terminus: Centrin-1 (172 aa).

Residues 1-30 (MASSYRKPTVASTSQKRKVGPKPELTEEQK) form a disordered region. 4 consecutive EF-hand domains span residues 28–63 (EQKQEVREAFDLFDADGSGTIDVKELKVAMRALGFE), 64–99 (PRKEEMKRMIADVDKEGTGKISFNDFLAVMTQKMAE), 101–136 (DTKEEILKAFRLFDDDETGKISFKNLKRVAKELGEN), and 137–172 (LTDEELQEMIDEADRDGDGEVNEDEFLRIMKKTNLY). Ca(2+)-binding residues include D41, D43, S45, T47, and E52. Positions 150, 152, 154, 156, and 161 each coordinate Ca(2+).

The protein belongs to the centrin family. In terms of assembly, monomer. Interacts with CIMAP3. Interacts with USP49.

It localises to the cytoplasm. Its subcellular location is the cytoskeleton. The protein resides in the microtubule organizing center. The protein localises to the centrosome. In terms of biological role, plays a fundamental role in microtubule-organizing center structure and function. Plays a role in sperm cilia formation. This is Centrin-1 (CETN1) from Bos taurus (Bovine).